A 145-amino-acid chain; its full sequence is Large ribosomal subunit protein uL13 (145 aa).

The protein belongs to the universal ribosomal protein uL13 family. Part of the 50S ribosomal subunit.

Its function is as follows. This protein is one of the early assembly proteins of the 50S ribosomal subunit, although it is not seen to bind rRNA by itself. It is important during the early stages of 50S assembly. This is Large ribosomal subunit protein uL13 from Geobacillus kaustophilus (strain HTA426).